A 274-amino-acid polypeptide reads, in one-letter code: Pyrroline-5-carboxylate reductase 3 (274 aa).

A2 carries the post-translational modification N-acetylalanine.

This sequence belongs to the pyrroline-5-carboxylate reductase family. As to quaternary structure, homodecamer; composed of 5 homodimers.

The protein resides in the cytoplasm. The enzyme catalyses L-proline + NADP(+) = (S)-1-pyrroline-5-carboxylate + NADPH + 2 H(+). It catalyses the reaction L-proline + NAD(+) = (S)-1-pyrroline-5-carboxylate + NADH + 2 H(+). It participates in amino-acid biosynthesis; L-proline biosynthesis; L-proline from L-glutamate 5-semialdehyde: step 1/1. Its function is as follows. Oxidoreductase that catalyzes the last step in proline biosynthesis, which corresponds to the reduction of pyrroline-5-carboxylate (P5C) to L-proline using NAD(P)H. Proline is synthesized from either glutamate or ornithine; both are converted to P5C, and then to proline via pyrroline-5-carboxylate reductases (PYCRs). PYCR3 is exclusively linked to the biosynthesis of proline from ornithine. The protein is Pyrroline-5-carboxylate reductase 3 of Mus musculus (Mouse).